A 154-amino-acid polypeptide reads, in one-letter code: Phosphopantetheine adenylyltransferase (154 aa).

Thr10 serves as a coordination point for substrate. ATP-binding positions include 10-11 (TF) and His18. Substrate is bound by residues Lys42, Leu74, and Arg88. ATP-binding positions include 89–91 (GLR), Glu99, and 124–130 (NAFISSS).

This sequence belongs to the bacterial CoaD family. As to quaternary structure, homohexamer. Requires Mg(2+) as cofactor.

It localises to the cytoplasm. The enzyme catalyses (R)-4'-phosphopantetheine + ATP + H(+) = 3'-dephospho-CoA + diphosphate. It functions in the pathway cofactor biosynthesis; coenzyme A biosynthesis; CoA from (R)-pantothenate: step 4/5. In terms of biological role, reversibly transfers an adenylyl group from ATP to 4'-phosphopantetheine, yielding dephospho-CoA (dPCoA) and pyrophosphate. The protein is Phosphopantetheine adenylyltransferase of Nautilia profundicola (strain ATCC BAA-1463 / DSM 18972 / AmH).